The primary structure comprises 315 residues: Solute carrier family 25 member 32 (315 aa).

3 Solcar repeats span residues 20 to 109 (HVRY…IKSY), 118 to 209 (LEAT…LKLK), and 222 to 306 (LSTV…VSHF). Transmembrane regions (helical) follow at residues 26-43 (LVAGVSGGVLSNLALHPL), 89-106 (VWGAGLSWGLYFFFYNAI), 123-143 (YLVSAAEAGAMTLCITNPLWV), 186-203 (FVPGLFGTSHGALQFMAY), 227-243 (YISVAALSKIFAVAATY), and 281-300 (GIAPNLIRVTPACCITFVVY).

This sequence belongs to the mitochondrial carrier (TC 2.A.29) family.

Its subcellular location is the mitochondrion inner membrane. It carries out the reaction FAD(in) = FAD(out). Facilitates flavin adenine dinucleotide (FAD) translocation across the mitochondrial inner membrane into the mitochondrial matrix where it acts as a redox cofactor to assist flavoenzyme activities in fundamental metabolic processes including fatty acid beta-oxidation, amino acid and choline metabolism as well as mitochondrial electron transportation. In particular, provides FAD to DLD dehydrogenase of the glycine cleavage system, part of mitochondrial one-carbon metabolic pathway involved in neural tube closure in early embryogenesis. The protein is Solute carrier family 25 member 32 of Macaca fascicularis (Crab-eating macaque).